A 267-amino-acid chain; its full sequence is Trehalose-phosphate phosphatase (267 aa).

The Nucleophile role is filled by Asp20. The Mg(2+) site is built by Asp20, Asp22, and Asp198. A substrate-binding site is contributed by 20–22 (DLD).

The protein belongs to the trehalose phosphatase family. Requires Mg(2+) as cofactor.

The enzyme catalyses alpha,alpha-trehalose 6-phosphate + H2O = alpha,alpha-trehalose + phosphate. It participates in glycan biosynthesis; trehalose biosynthesis. Its function is as follows. Removes the phosphate from trehalose 6-phosphate to produce free trehalose. This Salmonella typhimurium (strain LT2 / SGSC1412 / ATCC 700720) protein is Trehalose-phosphate phosphatase (otsB).